The sequence spans 224 residues: Prolactin-3D1 (224 aa).

The N-terminal stretch at 1-29 is a signal peptide; sequence MQLTLNLSGSAGMQLLLLVSSLLLWENVS. Intrachain disulfides connect Cys-81-Cys-199 and Cys-216-Cys-224. 2 N-linked (GlcNAc...) asparagine glycosylation sites follow: Asn-109 and Asn-158.

It belongs to the somatotropin/prolactin family.

The protein resides in the secreted. The polypeptide is Prolactin-3D1 (Prl3d1) (Mus musculus (Mouse)).